Here is a 463-residue protein sequence, read N- to C-terminus: Topoisomerase I damage affected protein 11 (463 aa).

The interval 1–110 is disordered; sequence MNGSTSSDAV…TIPDSPIPTA (110 aa). Polar residues-rich tracts occupy residues 17–32 and 40–55; these read TTPS…GSDT and ITPS…SKGI. Over residues 96–110 the composition is skewed to low complexity; that stretch reads SSPSSTIPDSPIPTA. The stretch at 145 to 177 forms a coiled coil; it reads IVEIKDSIGNLTSKLQRNENELHSLREVIQRSL. Disordered stretches follow at residues 180–255, 281–358, and 388–413; these read ELNS…DSTL, MIPQ…TESH, and ADED…NDQK. Low complexity predominate over residues 225-238; the sequence is LSSSSSGVPPVLSS. The span at 288–304 shows a compositional bias: basic and acidic residues; the sequence is EGSDKTMDSHKSRHSED. The span at 305–322 shows a compositional bias: low complexity; the sequence is STSSLGSISSPLNSKSKS.

The protein belongs to the TDA11 family.

It is found in the cytoplasm. The protein is Topoisomerase I damage affected protein 11 (TDA11) of Debaryomyces hansenii (strain ATCC 36239 / CBS 767 / BCRC 21394 / JCM 1990 / NBRC 0083 / IGC 2968) (Yeast).